A 468-amino-acid chain; its full sequence is H(+)/Cl(-) exchange transporter ClcA (468 aa).

Residues 1–32 (MIKRERIVKSVLAHVPKDAINQFVSRGSTPTS) lie on the Cytoplasmic side of the membrane. Residues 33–69 (FSVLFMAAIVGTLAGLVGTYFEIAVHFVSETRTEWLK) form a helical membrane-spanning segment. Residues 70-76 (SEIGSVL) lie on the Periplasmic side of the membrane. Residues 77 to 100 (PLWLAAILISGALAFIGYYLVNRF) form a helical membrane-spanning segment. A Selectivity filter part_1 motif is present at residues 106-110 (GSGIP). Position 107 (Ser-107) interacts with chloride. Positions 109–116 (IPEIEGAM) form an intramembrane region, helical. The Cytoplasmic segment spans residues 117-123 (DNIRSVR). 2 helical membrane-spanning segments follow: residues 124-141 (WWRV…ALGS) and 148-166 (EGPT…TDIF). The Selectivity filter part_2 motif lies at 146–150 (GREGP). The Cytoplasmic segment spans residues 167–176 (RVKDDDTRHS). 2 consecutive intramembrane regions (helical) follow at residues 177 to 189 (LLAS…LAAA) and 193 to 201 (PLAAIMFVV). At 202–214 (EEMRPQFRYSLIS) the chain is on the cytoplasmic side. The chain crosses the membrane as a helical span at residues 215–232 (IRAVIISAIMANIVFRAI). Topologically, residues 233-252 (NGQEAVITMPQYQSPELQSL) are periplasmic. A helical transmembrane segment spans residues 253 to 281 (WLFLLLGSLFGVFGVVFNKLITIAQDSFV). The Cytoplasmic segment spans residues 282 to 287 (ALHKND). The chain crosses the membrane as a helical span at residues 288 to 309 (RKRYLITGTILGGVFGLLLLYV). The Periplasmic portion of the chain corresponds to 310–329 (PQLTGGGIGLIPDITNGNYS). Transmembrane regions (helical) follow at residues 330–349 (ISIL…LCFG) and 355–376 (GIFA…ASAD). The short motif at 355–359 (GIFAP) is the Selectivity filter part_3 element. Positions 356 and 357 each coordinate chloride. Over 377-386 (MLLPSLTIEP) the chain is Periplasmic. The helical intramembrane region spans 387 to 401 (GVFAIAGMGALFAAT). The segment at residues 402–404 (VRA) is an intramembrane region (note=Loop between two helices). The segment at residues 405-416 (PITGILLVIEMT) is an intramembrane region (helical). The note=Loop between two helices intramembrane region spans 417 to 421 (NNYYL). A helical transmembrane segment spans residues 422–438 (ILPLIITSLGAVIVAQL). The Cytoplasmic portion of the chain corresponds to 439–468 (LGGQPIYSQLLHRTLKNDKLRQQDLPENQA). Tyr-445 contributes to the chloride binding site.

It belongs to the chloride channel (TC 2.A.49) family. ClcA subfamily. Homodimer.

The protein resides in the cell inner membrane. It carries out the reaction 2 chloride(in) + H(+)(out) = 2 chloride(out) + H(+)(in). In terms of biological role, proton-coupled chloride transporter. Functions as antiport system and exchanges two chloride ions for 1 proton. Probably acts as an electrical shunt for an outwardly-directed proton pump that is linked to amino acid decarboxylation, as part of the extreme acid resistance (XAR) response. The protein is H(+)/Cl(-) exchange transporter ClcA of Vibrio campbellii (strain ATCC BAA-1116).